Reading from the N-terminus, the 402-residue chain is MSRVSQARNLGKYFLLIDNMLVVLGFFVVFPLISIRFVDQMGWAAVMVGIALGLRQFIQQGLGIFGGAIADRFGAKPMIVTGMLMRAAGFATMGIAHEPWLLWFSCLLSGLGGTLFDPPRSALVVKLIRPQQRGRFFSLLMMQDSAGAVIGALLGSWLLQYDFRLVCATGAVLFVLCAAFNAWLLPAWKLSTVRTPVREGMTRVMRDKRFVTYVLTLAGYYMLAVQVMLMLPIMVNDVAGAPSAVKWMYAIEACLSLTLLYPIARWSEKHFRLEHRLMAGLLIMSLSMMPVGMVSGLQQLFTLICLFYIGSIIAEPARETLSASLADARARGSYMGCSRLGLAIGGAIGYIGGGWLFDLGKSAHQPELPWMMLGIIGIFTFLALGWQFSQKRAARRLLERDA.

Topologically, residues Met-1–Lys-12 are cytoplasmic. A helical transmembrane segment spans residues Tyr-13–Ile-33. The Periplasmic segment spans residues Ser-34–Glu-98. A helical membrane pass occupies residues Pro-99 to Phe-116. Residues Asp-117–Ser-138 lie on the Cytoplasmic side of the membrane. The chain crosses the membrane as a helical span at residues Leu-139–Leu-159. Residues Gln-160 to Arg-164 are Periplasmic-facing. The chain crosses the membrane as a helical span at residues Leu-165–Leu-185. At Pro-186–Tyr-213 the chain is on the cytoplasmic side. The helical transmembrane segment at Val-214 to Met-234 threads the bilayer. Over Val-235–Ser-243 the chain is Periplasmic. Residues Ala-244 to Ala-264 form a helical membrane-spanning segment. At Arg-265–Arg-276 the chain is on the cytoplasmic side. A helical transmembrane segment spans residues Leu-277 to Leu-297. Residues Gln-298–Gln-299 are Periplasmic-facing. Residues Leu-300–Thr-320 traverse the membrane as a helical segment. Over Leu-321–Arg-339 the chain is Cytoplasmic. Residues Leu-340–Gly-360 form a helical membrane-spanning segment. At Lys-361 to Glu-367 the chain is on the periplasmic side. A helical transmembrane segment spans residues Leu-368–Phe-388. Residues Ser-389 to Ala-402 lie on the Cytoplasmic side of the membrane.

This sequence belongs to the major facilitator superfamily. DHA1 family. MdtH (TC 2.A.1.2.21) subfamily.

It localises to the cell inner membrane. In terms of biological role, confers resistance to norfloxacin and enoxacin. The chain is Multidrug resistance protein MdtH from Escherichia coli (strain SE11).